The sequence spans 498 residues: Pyruvate kinase (498 aa).

Residue Arg53 coordinates substrate. The K(+) site is built by Asn55, Ser57, Asp87, and Thr88. Asn55–His58 serves as a coordination point for ATP. Residues Arg94 and Lys178 each contribute to the ATP site. Glu240 is a Mg(2+) binding site. Positions 263, 264, and 296 each coordinate substrate. Asp264 is a binding site for Mg(2+).

The protein belongs to the pyruvate kinase family. Homotetramer. Requires Mg(2+) as cofactor. The cofactor is K(+).

It carries out the reaction pyruvate + ATP = phosphoenolpyruvate + ADP + H(+). It participates in carbohydrate degradation; glycolysis; pyruvate from D-glyceraldehyde 3-phosphate: step 5/5. This chain is Pyruvate kinase (PYK), found in Trypanoplasma borreli.